Here is a 328-residue protein sequence, read N- to C-terminus: MAHSKQPSHFQSLMLLQWPLSYLAIFWILQPLFVYLLFTSLWPLPVLYFAWLFLDWKTPERGGRRSAWVRNWCVWTHIRDYFPITILKTKDLSPEHNYLMGVHPHGLLTFGAFCNFCTEATGFSKTFPGITPHLATLSWFFKIPFVREYLMAKGVCSVSQPAINYLLSHGTGNLVGIVVGGVGEALQSVPNTTTLILQKRKGFVRTALQHGAHLVPTFTFGETEVYDQVLFHKDSRMYKFQSCFRRIFGFYCCVFYGQSFCQGSTGLLPYSRPIVTVVGEPLPLPQIEKPSQEMVDKYHALYMDALHKLFDQHKTHYGCSETQKLFFL.

2 helical membrane passes run 12–32 (SLMLLQWPLSYLAIFWILQPL) and 34–53 (VYLLFTSLWPLPVLYFAWLF).

The protein belongs to the diacylglycerol acyltransferase family. As to expression, predominantly expressed in skin, where it is limited to the sebaceous gland. Expressed in more mature, centrally located cells just before their rupture and sebum release. Also expressed in all tissues except spleen. Expressed at higher level in thymus, prostate and testis.

Its subcellular location is the endoplasmic reticulum membrane. The catalysed reaction is a long chain fatty alcohol + a fatty acyl-CoA = a wax ester + CoA. It carries out the reaction 1,2-di-(9Z-octadecenoyl)-sn-glycerol + (9Z)-octadecenoyl-CoA = 1,2,3-tri-(9Z-octadecenoyl)-glycerol + CoA. It catalyses the reaction hexadecan-1-ol + (9Z)-octadecenoyl-CoA = hexadecanyl (9Z)-octadecenoate + CoA. The enzyme catalyses decan-1-ol + (9Z)-octadecenoyl-CoA = 1-O-decyl-(9Z)-octadecenoate + CoA. The catalysed reaction is (9Z)-hexadecen-1-ol + (9Z)-octadecenoyl-CoA = 1-O-(9Z)-hexadecenyl (9Z)-octadecenoate + CoA. It carries out the reaction octadecan-1-ol + (9Z)-octadecenoyl-CoA = 1-O-octadecyl (9Z)-octadecenoate + CoA. It catalyses the reaction (9Z)-octadecen-1-ol + (9Z)-octadecenoyl-CoA = 1-O-(9Z)-octadecenyl (9Z)-octadecenoate + CoA. The enzyme catalyses hexadecan-1-ol + hexadecanoyl-CoA = hexadecanyl hexadecanoate + CoA. The catalysed reaction is hexadecan-1-ol + (9Z)-hexadecenoyl-CoA = 1-O-hexadecyl (9Z)-hexadecenoate + CoA. It carries out the reaction hexadecan-1-ol + octadecanoyl-CoA = hexadecanyl octadecanoate + CoA. It catalyses the reaction eicosan-1-ol + (9Z)-octadecenoyl-CoA = 1-O-eicosanyl (9Z)-octadecenoate + CoA. Acyltransferase that catalyzes the formation of ester bonds between fatty alcohols and fatty acyl-CoAs to form wax monoesters. Shows a strong preference for decyl alcohol (C10), with less activity towards C16 and C18 alcohols. Shows a strong preference for saturated acyl-CoAs. In Homo sapiens (Human), this protein is Acyl-CoA wax alcohol acyltransferase 1 (AWAT1).